The chain runs to 121 residues: Putative iron-sulfur cluster insertion protein ErpA 1 (121 aa).

Positions 49, 113, and 115 each coordinate iron-sulfur cluster.

Belongs to the HesB/IscA family. In terms of assembly, homodimer. Requires iron-sulfur cluster as cofactor.

Functionally, required for insertion of 4Fe-4S clusters. In Polaromonas naphthalenivorans (strain CJ2), this protein is Putative iron-sulfur cluster insertion protein ErpA 1.